The primary structure comprises 529 residues: AT hook-containing protein attf-4 (529 aa).

Disordered regions lie at residues 1–39 (MLQP…MEDD), 131–158 (QVVH…KPIE), 173–200 (GGGG…FPPP), and 233–255 (VSAN…DHLE). Composition is skewed to polar residues over residues 19-31 (SVST…SPSN) and 138-153 (QNGS…TSEN). The segment covering 179-189 (IHTERLSEPAR) has biased composition (basic and acidic residues). The span at 233 to 248 (VSANTSTASPGPSSEG) shows a compositional bias: low complexity. Positions 307 to 319 (GRGRGRPKLIGDE) form a DNA-binding region, a.T hook. The disordered stretch occupies residues 436-476 (LEGGSPPASSSSTATTSTATKTVKQESKNGHQNEENLNVKQ). The span at 443 to 455 (ASSSSTATTSTAT) shows a compositional bias: low complexity. Residues 458–469 (VKQESKNGHQNE) are compositionally biased toward basic and acidic residues.

This Caenorhabditis elegans protein is AT hook-containing protein attf-4.